Here is a 504-residue protein sequence, read N- to C-terminus: MTVPALASASGLLQVASLLGLLLLLLKAAQLYLRRQWLLKALQQFPSPPSHWLYGHSREFQEESELQPLLKRVEKYPSACARWLWGTRAMVLVYDPDYMKVVLARSEPKAPVLYRLLIPWIGCGLLLLNGQTWFQRRRMLTPAFHYDILKPYVGLMAKSVQVMLDKWEQLVAQDPRLEIVGPVSLMTLDTIMKCAFSHQGSAQTDGDSHSYIQAIWDLKNLFSIRTKSAFLQNDIIYRLSPEGRKNHRAARIAHQHTDRVIQLRKAQLQKQGEMENVRKKRHLDFLDILLLARMEKGNSLSDTDLRAEVDTFMFEGHDTTASGISWILYALASHPEHQQRCREEIQGLLGDGTSITWDHLDQMPYTTMCIKEALRLYPPVPGVSRELSKPITFPDGRSLPAGIILSLSVYSLHHNPQVWPNPEEFDPSRFAPGSARHSHAFMPFSGGSRNCIGKQFAMNEMKVAVALTLLRFELAPDPSRKPTVIPEVVLHSKNGIHLKLRKLP.

The next 2 membrane-spanning stretches (helical) occupy residues 6–26 and 110–130; these read LASA…LLLL and APVL…LLNG. Residue cysteine 451 participates in heme binding.

This sequence belongs to the cytochrome P450 family. Requires heme as cofactor.

The protein localises to the endoplasmic reticulum membrane. The enzyme catalyses an omega-methyl-long-chain fatty acid + reduced [NADPH--hemoprotein reductase] + O2 = an omega-hydroxy-long-chain fatty acid + oxidized [NADPH--hemoprotein reductase] + H2O + H(+). Functionally, catalyzes the omega- and (omega-1)-hydroxylation of various fatty acids such as laurate and palmitate. Has no activity toward taurochenodeoxycholic acid. The sequence is that of Cytochrome P450 4A25 (CYP4A25) from Sus scrofa (Pig).